A 432-amino-acid polypeptide reads, in one-letter code: 5'-deoxyadenosine deaminase (432 aa).

Zn(2+) contacts are provided by H63 and H65. The substrate site is built by E92 and H184. H211 provides a ligand contact to Zn(2+). 2 residues coordinate substrate: E214 and D299. D299 contacts Zn(2+).

It belongs to the metallo-dependent hydrolases superfamily. MTA/SAH deaminase family. Homotetramer. Requires Zn(2+) as cofactor.

It carries out the reaction 5'-deoxyadenosine + H2O + H(+) = 5'-deoxyinosine + NH4(+). It catalyses the reaction S-adenosyl-L-homocysteine + H2O + H(+) = S-inosyl-L-homocysteine + NH4(+). The catalysed reaction is S-methyl-5'-thioadenosine + H2O + H(+) = S-methyl-5'-thioinosine + NH4(+). The enzyme catalyses adenosine + H2O + H(+) = inosine + NH4(+). Its pathway is amino-acid biosynthesis; S-adenosyl-L-methionine biosynthesis. Its function is as follows. Catalyzes the deamination of three SAM-derived enzymatic products, namely 5'-deoxyadenosine, S-adenosyl-L-homocysteine, and 5'-methylthioadenosine, to produce the inosine analogs. Can also deaminate adenosine. The preferred substrate for this enzyme is 5'-deoxyadenosine, but all these substrates are efficiently deaminated. Likely functions in a S-adenosyl-L-methionine (SAM) recycling pathway from S-adenosyl-L-homocysteine (SAH) produced from SAM-dependent methylation reactions. May also be involved in the recycling of 5'-deoxyadenosine, whereupon the 5'-deoxyribose moiety of 5'-deoxyinosine is further metabolized to deoxyhexoses used for the biosynthesis of aromatic amino acids in methanogens. This chain is 5'-deoxyadenosine deaminase, found in Methanosarcina barkeri (strain Fusaro / DSM 804).